We begin with the raw amino-acid sequence, 546 residues long: Endoplasmic reticulum oxidoreductin-1 (546 aa).

A signal peptide spans 1 to 18 (MQLNKLMLGFMLCASALA). Cystine bridges form between cysteine 84–cysteine 344, cysteine 94–cysteine 99, cysteine 137–cysteine 161, cysteine 144–cysteine 290, and cysteine 347–cysteine 350. FAD-binding residues include arginine 182, threonine 184, tryptophan 195, serine 223, histidine 226, and arginine 255. An N-linked (GlcNAc...) asparagine glycan is attached at asparagine 337. Cysteine 347 acts as the Nucleophile in catalysis. Residue cysteine 350 is part of the active site. N-linked (GlcNAc...) asparagine glycans are attached at residues asparagine 422 and asparagine 449.

It belongs to the EROs family. In terms of assembly, may function both as a monomer and a homodimer. FAD is required as a cofactor.

The protein localises to the endoplasmic reticulum membrane. Essential oxidoreductase that oxidizes proteins in the endoplasmic reticulum to produce disulfide bonds. Acts by oxidizing directly PDI1 isomerase through a direct disulfide exchange. Does not act as a direct oxidant of folding substrate, but relies on PDI1 to transfer oxidizing equivalent. Does not oxidize all pdi related proteins, suggesting that it can discriminate between PDI1 and related proteins. Its reoxidation probably involves electron transfer to molecular oxygen via FAD. Acts independently of glutathione. May be responsible for a significant proportion of reactive oxygen species (ROS) in the cell, thereby being a source of oxidative stress. The polypeptide is Endoplasmic reticulum oxidoreductin-1 (ERO1) (Eremothecium gossypii (strain ATCC 10895 / CBS 109.51 / FGSC 9923 / NRRL Y-1056) (Yeast)).